The following is a 251-amino-acid chain: Ubiquitin-conjugating enzyme E2 22 (251 aa).

One can recognise a UBC core domain in the interval 10–156; the sequence is NVIKQLAKEL…ARLYTGIHAK (147 aa). C94 functions as the Glycyl thioester intermediate in the catalytic mechanism. Residues 230-240 are compositionally biased toward basic and acidic residues; sequence GLAKVQADKKK. The interval 230 to 251 is disordered; the sequence is GLAKVQADKKKVDARKKSLKRL. A coiled-coil region spans residues 230–251; sequence GLAKVQADKKKVDARKKSLKRL. Basic residues predominate over residues 241-251; the sequence is VDARKKSLKRL.

It belongs to the ubiquitin-conjugating enzyme family. Post-translationally, self-ubiquitinated. As to expression, expressed in seeds, pistils, siliques, hypocotyls and leaves.

The enzyme catalyses S-ubiquitinyl-[E1 ubiquitin-activating enzyme]-L-cysteine + [E2 ubiquitin-conjugating enzyme]-L-cysteine = [E1 ubiquitin-activating enzyme]-L-cysteine + S-ubiquitinyl-[E2 ubiquitin-conjugating enzyme]-L-cysteine.. It functions in the pathway protein modification; protein ubiquitination. In terms of biological role, accepts the ubiquitin from the E1 complex and catalyzes its covalent attachment to other proteins. In Arabidopsis thaliana (Mouse-ear cress), this protein is Ubiquitin-conjugating enzyme E2 22 (UBC22).